A 427-amino-acid polypeptide reads, in one-letter code: Vitamin D3 receptor (427 aa).

Residues 21 to 96 (PRICGVCGDR…IGMMKEFILT (76 aa)) constitute a DNA-binding region (nuclear receptor). Zn(2+) is bound by residues Cys-24, Cys-27, Cys-41, Cys-44, Cys-60, Cys-66, Cys-76, and Cys-79. 2 NR C4-type zinc fingers span residues 24–44 (CGVC…CEGC) and 60–84 (CPFN…LKRC). A hinge region spans residues 97–126 (DEEVQRKREMILKRKEEEALKDSLRPKLSE). The NR LBD domain occupies 127–423 (EQQRIIAILL…LTPLVLEVFG (297 aa)). Calcitriol is bound at residue Tyr-143. The interval 158-183 (RVNDGGGSHPSRPNSRHTPSFSGDSS) is disordered. Ser-237 is a calcitriol binding site. Residues 246-264 (KMIPGFRDLTSEDQIVLLK) are interaction with coactivator LXXLL motif. Arg-274, Ser-278, His-305, and His-397 together coordinate calcitriol. The short motif at 416–424 (PLVLEVFGN) is the 9aaTAD element.

This sequence belongs to the nuclear hormone receptor family. NR1 subfamily. Homodimer in the absence of bound vitamin D3. Heterodimer with RXRA after vitamin D3 binding. Interacts with MED1, NCOA1, NCOA2, NCOA3 and NCOA6 coactivators, leading to a strong increase of transcription of target genes. Interacts with the corepressor NCOR1. Interacts with SNW1. Interacts with IRX4, the interaction does not affect its transactivation activity. Post-translationally, ubiquitinated by UBR5, leading to its degradation: UBR5 specifically recognizes and binds ligand-bound VDR when it is not associated with coactivators (NCOAs). In presence of NCOAs, the UBR5-degron is not accessible, preventing its ubiquitination and degradation.

It is found in the nucleus. The protein localises to the cytoplasm. Its function is as follows. Nuclear receptor for calcitriol, the active form of vitamin D3 which mediates the action of this vitamin on cells. Enters the nucleus upon vitamin D3 binding where it forms heterodimers with the retinoid X receptor/RXR. The VDR-RXR heterodimers bind to specific response elements on DNA and activate the transcription of vitamin D3-responsive target genes. Plays a central role in calcium homeostasis. The sequence is that of Vitamin D3 receptor (VDR) from Saguinus oedipus (Cotton-top tamarin).